Here is a 447-residue protein sequence, read N- to C-terminus: Acid phosphatase (447 aa).

Positions 1 to 17 (MKPSVATLLATVSLVYA) are cleaved as a signal peptide. 5 N-linked (GlcNAc...) asparagine glycosylation sites follow: asparagine 119, asparagine 150, asparagine 177, asparagine 186, and asparagine 208. Aspartate 215 functions as the Proton donor in the catalytic mechanism. 7 N-linked (GlcNAc...) asparagine glycosylation sites follow: asparagine 217, asparagine 234, asparagine 240, asparagine 315, asparagine 332, asparagine 382, and asparagine 405. A lipid anchor (GPI-like-anchor amidated serine) is attached at serine 419. The propeptide at 420-447 (ASSNAAVSAVAPAAGVSGLLLGLALNLL) is removed in mature form.

In terms of processing, the GPI-like anchor contains a phosphoceramide lipid group. The anchor position has not been determined.

It is found in the cell membrane. The enzyme catalyses a phosphate monoester + H2O = an alcohol + phosphate. Its activity is regulated as follows. Inhibited by NaF, molybdate and vanadate. In terms of biological role, has both phosphomonoesterase and phosphodiesterase activity. Cleaves a broad range of phosphate esters. This Aspergillus fumigatus (strain ATCC MYA-4609 / CBS 101355 / FGSC A1100 / Af293) (Neosartorya fumigata) protein is Acid phosphatase (phoA).